Here is a 129-residue protein sequence, read N- to C-terminus: Small ribosomal subunit protein eS6 (129 aa).

It belongs to the eukaryotic ribosomal protein eS6 family.

In Archaeoglobus fulgidus (strain ATCC 49558 / DSM 4304 / JCM 9628 / NBRC 100126 / VC-16), this protein is Small ribosomal subunit protein eS6.